The primary structure comprises 684 residues: Extracellular lipase (684 aa).

A signal peptide spans 1–48 (MKKKLIYAAVVSALLAGCGGSDDNKGDTSSYLDYLLTGSNAVGPSALA). Disordered stretches follow at residues 321–405 (SIPV…ADWG) and 462–493 (QRER…GDRS). Positions 385–405 (ADCRSDPPERAAGRGEQADWG) are enriched in basic and acidic residues. The active-site Nucleophile is the serine 568.

It belongs to the AB hydrolase superfamily. Lipase family. Monomer.

The protein resides in the secreted. The enzyme catalyses a triacylglycerol + H2O = a diacylglycerol + a fatty acid + H(+). The optimum chain lengths for the acyl moiety is C6 for ester hydrolysis and C6 and C8 for triacylglycerol hydrolysis. This Aeromonas hydrophila protein is Extracellular lipase.